We begin with the raw amino-acid sequence, 388 residues long: Lipid-A-disaccharide synthase (388 aa).

The protein belongs to the LpxB family.

It catalyses the reaction a lipid X + a UDP-2-N,3-O-bis[(3R)-3-hydroxyacyl]-alpha-D-glucosamine = a lipid A disaccharide + UDP + H(+). Its pathway is bacterial outer membrane biogenesis; LPS lipid A biosynthesis. Its function is as follows. Condensation of UDP-2,3-diacylglucosamine and 2,3-diacylglucosamine-1-phosphate to form lipid A disaccharide, a precursor of lipid A, a phosphorylated glycolipid that anchors the lipopolysaccharide to the outer membrane of the cell. The chain is Lipid-A-disaccharide synthase from Burkholderia pseudomallei (strain K96243).